We begin with the raw amino-acid sequence, 337 residues long: Glycerol-3-phosphate dehydrogenase [NAD(P)+] (337 aa).

NADPH-binding residues include Ser-12, Trp-13, and Lys-110. Residues Lys-110, Gly-141, and Ser-143 each coordinate sn-glycerol 3-phosphate. Position 145 (Ala-145) interacts with NADPH. Residues Lys-196, Asp-249, Ser-259, Arg-260, and Asn-261 each contribute to the sn-glycerol 3-phosphate site. The active-site Proton acceptor is Lys-196. Arg-260 contributes to the NADPH binding site. NADPH is bound by residues Val-284 and Glu-286.

Belongs to the NAD-dependent glycerol-3-phosphate dehydrogenase family.

Its subcellular location is the cytoplasm. It carries out the reaction sn-glycerol 3-phosphate + NAD(+) = dihydroxyacetone phosphate + NADH + H(+). The catalysed reaction is sn-glycerol 3-phosphate + NADP(+) = dihydroxyacetone phosphate + NADPH + H(+). The protein operates within membrane lipid metabolism; glycerophospholipid metabolism. Catalyzes the reduction of the glycolytic intermediate dihydroxyacetone phosphate (DHAP) to sn-glycerol 3-phosphate (G3P), the key precursor for phospholipid synthesis. This is Glycerol-3-phosphate dehydrogenase [NAD(P)+] from Levilactobacillus brevis (strain ATCC 367 / BCRC 12310 / CIP 105137 / JCM 1170 / LMG 11437 / NCIMB 947 / NCTC 947) (Lactobacillus brevis).